Reading from the N-terminus, the 401-residue chain is Argininosuccinate synthase (401 aa).

9 to 17 is a binding site for ATP; sequence AYSGGLDTS. Tyrosine 86 contributes to the L-citrulline binding site. Glycine 116 is a binding site for ATP. L-aspartate contacts are provided by threonine 118, asparagine 122, and aspartate 123. Residue asparagine 122 participates in L-citrulline binding. Positions 126, 174, 183, 259, and 271 each coordinate L-citrulline.

It belongs to the argininosuccinate synthase family. Type 1 subfamily. Homotetramer.

The protein resides in the cytoplasm. It catalyses the reaction L-citrulline + L-aspartate + ATP = 2-(N(omega)-L-arginino)succinate + AMP + diphosphate + H(+). It participates in amino-acid biosynthesis; L-arginine biosynthesis; L-arginine from L-ornithine and carbamoyl phosphate: step 2/3. This Bacillus thuringiensis (strain Al Hakam) protein is Argininosuccinate synthase.